We begin with the raw amino-acid sequence, 229 residues long: Mannose-specific lectin TAR1 (229 aa).

The signal sequence occupies residues 1–23 (MAKLLLFLLPAILGLLIPRSAVA). Bulb-type lectin domains are found at residues 26–131 (TNYL…PWVP) and 145–229 (DNLL…DYVL). Beta-D-mannose-binding positions include 51–55 (QNDCN), Tyr-59, Trp-63, Gln-64, 170–174 (QGDCN), Tyr-178, and 182–185 (YGWQ). A Carbohydrate-binding motif 1 motif is present at residues 51 to 59 (QNDCNLVLY). Cystine bridges form between Cys-54-Cys-74 and Cys-173-Cys-195. Positions 170-178 (QGDCNLVLY) match the Carbohydrate-binding motif 2 motif.

In terms of assembly, forms heterotetramer of 2 chains 1 and 2 chains 2 arranged as a dimer of chain 1 and chain 2 heterodimers.

The protein resides in the secreted. Functionally, mannose-specific lectin. Shows agglutinating activity towards erythrocytes from rabbit. This chain is Mannose-specific lectin TAR1, found in Colocasia esculenta (Wild taro).